The sequence spans 204 residues: Large ribosomal subunit protein uL4 (204 aa).

Residues 49-90 (KVKGMGEVSGTTKKPYRQKGTGSARQGSLRAPQYRTGGAVHG) form a disordered region.

It belongs to the universal ribosomal protein uL4 family. As to quaternary structure, part of the 50S ribosomal subunit.

One of the primary rRNA binding proteins, this protein initially binds near the 5'-end of the 23S rRNA. It is important during the early stages of 50S assembly. It makes multiple contacts with different domains of the 23S rRNA in the assembled 50S subunit and ribosome. Its function is as follows. Forms part of the polypeptide exit tunnel. The sequence is that of Large ribosomal subunit protein uL4 from Gluconacetobacter diazotrophicus (strain ATCC 49037 / DSM 5601 / CCUG 37298 / CIP 103539 / LMG 7603 / PAl5).